Consider the following 195-residue polypeptide: Large ribosomal subunit protein uL5 (195 aa).

Belongs to the universal ribosomal protein uL5 family. As to quaternary structure, part of the 50S ribosomal subunit; part of the 5S rRNA/L5/L18/L25 subcomplex. Contacts the 5S rRNA and the P site tRNA. Forms a bridge to the 30S subunit in the 70S ribosome.

Functionally, this is one of the proteins that bind and probably mediate the attachment of the 5S RNA into the large ribosomal subunit, where it forms part of the central protuberance. In the 70S ribosome it contacts protein S13 of the 30S subunit (bridge B1b), connecting the 2 subunits; this bridge is implicated in subunit movement. Contacts the P site tRNA; the 5S rRNA and some of its associated proteins might help stabilize positioning of ribosome-bound tRNAs. The sequence is that of Large ribosomal subunit protein uL5 from Chlorobium phaeobacteroides (strain DSM 266 / SMG 266 / 2430).